A 151-amino-acid polypeptide reads, in one-letter code: UPF0208 membrane protein ECA3038 (151 aa).

2 helical membrane passes run phenylalanine 46–glycine 66 and leucine 69–tryptophan 89.

The protein belongs to the UPF0208 family.

The protein resides in the cell inner membrane. This chain is UPF0208 membrane protein ECA3038, found in Pectobacterium atrosepticum (strain SCRI 1043 / ATCC BAA-672) (Erwinia carotovora subsp. atroseptica).